We begin with the raw amino-acid sequence, 348 residues long: Endoglucanase-6B (348 aa).

Substrate-binding residues include tryptophan 52 and serine 54. Active-site proton donor residues include aspartate 92 and aspartate 139. Positions 183, 186, 222, 282, 310, and 314 each coordinate substrate. Low complexity predominate over residues 222–241 (NYNPYSTSNPPPYTSGSPSP). Residues 222 to 244 (NYNPYSTSNPPPYTSGSPSPDES) are disordered.

This sequence belongs to the glycosyl hydrolase 6 (cellulase B) family. Monomer.

It catalyses the reaction Endohydrolysis of (1-&gt;4)-beta-D-glucosidic linkages in cellulose, lichenin and cereal beta-D-glucans.. Functionally, plays a central role in the recycling of plant biomass. The biological conversion of cellulose to glucose generally requires three types of hydrolytic enzymes: (1) Endoglucanases which cut internal beta-1,4-glucosidic bonds; (2) Exocellobiohydrolases that cut the disaccharide cellobiose from the non-reducing end of the cellulose polymer chain; (3) Beta-1,4-glucosidases which hydrolyze the cellobiose and other short cello-oligosaccharides to glucose. In Humicola insolens (Soft-rot fungus), this protein is Endoglucanase-6B.